Consider the following 278-residue polypeptide: Adenosylcobinamide-GDP ribazoletransferase (278 aa).

Transmembrane regions (helical) follow at residues 44-64 (GIGV…QLLL), 69-89 (FTPL…TGGF), 121-141 (AFGA…LALL), 161-181 (VCAA…VMIW), 204-224 (GGLA…SLAL), and 227-247 (INLI…LRFF).

This sequence belongs to the CobS family. Mg(2+) is required as a cofactor.

The protein localises to the cell inner membrane. It catalyses the reaction alpha-ribazole + adenosylcob(III)inamide-GDP = adenosylcob(III)alamin + GMP + H(+). The enzyme catalyses alpha-ribazole 5'-phosphate + adenosylcob(III)inamide-GDP = adenosylcob(III)alamin 5'-phosphate + GMP + H(+). It participates in cofactor biosynthesis; adenosylcobalamin biosynthesis; adenosylcobalamin from cob(II)yrinate a,c-diamide: step 7/7. Joins adenosylcobinamide-GDP and alpha-ribazole to generate adenosylcobalamin (Ado-cobalamin). Also synthesizes adenosylcobalamin 5'-phosphate from adenosylcobinamide-GDP and alpha-ribazole 5'-phosphate. The protein is Adenosylcobinamide-GDP ribazoletransferase of Polaromonas naphthalenivorans (strain CJ2).